The sequence spans 224 residues: MKPQDLKLPYFWEDRCPKIENHVFYVPSYYPKYEEFVMPSWQNLFANEGPVCCELCSGNGDWVVEQALKDTSINWIAVEKRFDRVRKIWSKMSNHKVNNLLIVCGEAQTFFTHYVTDASFQKIVVNFPDPWPKFRHRKHRLFQDVFVQDMVRVLVEGGQLTLVTDDHTYLTNSIQVMLNYLSPGMQDPYYVNVKDNYGGSWFENLWRSKGEKIFCTEFVKRVGI.

E54, E79, E106, and D129 together coordinate S-adenosyl-L-methionine. D129 is a catalytic residue. Substrate is bound by residues K133 and D165.

The protein belongs to the class I-like SAM-binding methyltransferase superfamily. TrmB family.

The enzyme catalyses guanosine(46) in tRNA + S-adenosyl-L-methionine = N(7)-methylguanosine(46) in tRNA + S-adenosyl-L-homocysteine. Its pathway is tRNA modification; N(7)-methylguanine-tRNA biosynthesis. Its function is as follows. Catalyzes the formation of N(7)-methylguanine at position 46 (m7G46) in tRNA. The sequence is that of tRNA (guanine-N(7)-)-methyltransferase from Chlamydia muridarum (strain MoPn / Nigg).